The chain runs to 61 residues: UPF0434 protein PSEEN1604 (61 aa).

The protein belongs to the UPF0434 family.

The sequence is that of UPF0434 protein PSEEN1604 from Pseudomonas entomophila (strain L48).